The following is a 577-amino-acid chain: Cryptochrome DASH, chloroplastic/mitochondrial (577 aa).

The N-terminal 53 residues, Met-1 to Glu-53, are a transit peptide targeting the chloroplast and mitochondrion. Residues Gly-78 to Thr-219 enclose the Photolyase/cryptochrome alpha/beta domain. A disordered region spans residues Thr-550–Tyr-577.

Belongs to the DNA photolyase class-1 family. The cofactor is FAD. (6R)-5,10-methylene-5,6,7,8-tetrahydrofolate is required as a cofactor. Expressed in the endosperm and embryo 96 hours after seed imbibition. In the embryo, detected in the root meristem, the root cap, the shoot apical meristem and the epidermis of cotyledons. In adult plants, detcted in roots, the whole leaf lamina, the stem and in glandular trichomes.

It is found in the plastid. Its subcellular location is the chloroplast. The protein resides in the mitochondrion. Functionally, may have a photoreceptor function and might bind ss- and ds-DNA in a sequence non-specific manner. Lacks photolyase activity. Has a potential role in detecting the dawn and dusk transitions and, consequently, in circadian input pathways. The protein is Cryptochrome DASH, chloroplastic/mitochondrial of Solanum lycopersicum (Tomato).